A 696-amino-acid chain; its full sequence is Caprolactamase subunit alpha (696 aa).

The protein belongs to the HyuA family. In terms of assembly, the caprolactamase is a heterotetramer composed of two alpha subunits (CapA) and two beta subunits (CapB).

Its activity is regulated as follows. Activity is dependent on the presence of ATP and bicarbonate. The requirement for bicarbonate may be related to allosteric activation through conformational effects, but it is also conceivable that carboxyphosphate is formed and acts as a mediator in caprolactam activation, forming carboxy- or phospholactim. Component of a caprolactamase involved in the degradation of caprolactam, an industrial compound mainly used in the production of Nylon 6. Catalyzes the ATP-dependent hydrolysis of the caprolactam ring to form 6-aminocaproic acid (6-ACA). The alpha subunit is responsible for ATP-dependent substrate phosphorylation. The enzyme cannot use 5-oxoproline. The sequence is that of Caprolactamase subunit alpha from Pseudomonas jessenii.